A 571-amino-acid polypeptide reads, in one-letter code: Proline--tRNA ligase (571 aa).

This sequence belongs to the class-II aminoacyl-tRNA synthetase family. ProS type 1 subfamily. Homodimer.

It is found in the cytoplasm. It catalyses the reaction tRNA(Pro) + L-proline + ATP = L-prolyl-tRNA(Pro) + AMP + diphosphate. Catalyzes the attachment of proline to tRNA(Pro) in a two-step reaction: proline is first activated by ATP to form Pro-AMP and then transferred to the acceptor end of tRNA(Pro). As ProRS can inadvertently accommodate and process non-cognate amino acids such as alanine and cysteine, to avoid such errors it has two additional distinct editing activities against alanine. One activity is designated as 'pretransfer' editing and involves the tRNA(Pro)-independent hydrolysis of activated Ala-AMP. The other activity is designated 'posttransfer' editing and involves deacylation of mischarged Ala-tRNA(Pro). The misacylated Cys-tRNA(Pro) is not edited by ProRS. This is Proline--tRNA ligase from Acinetobacter baumannii (strain AB307-0294).